Reading from the N-terminus, the 1027-residue chain is Abnormal embryogenesis protein 30 (1027 aa).

WD repeat units follow at residues 18–65 (RTPF…IQAV) and 70–109 (KLDSSVSALHFSPDGRFLAAATSKGIIHLLDVETGKVRFS). 2 disordered regions span residues 619–655 (NDSSPFLEEDEGEPEQEEQKPDEEPEPEGEPQPACDL) and 1005–1027 (AMDSGRDLTDNGESDEDEEDDDI). 2 stretches are compositionally biased toward acidic residues: residues 625-647 (LEEDEGEPEQEEQKPDEEPEPEG) and 1014-1027 (DNGESDEDEEDDDI).

It belongs to the APC4 family. In terms of assembly, the APC/C is probably composed of at least 12 subunits: apc-2, apc-10, apc-11, cdc-26, emb-1, emb-27, emb-30, mat-1, mat-2, mat-3, such-1 and gfi-3.

Its pathway is protein modification; protein ubiquitination. In terms of biological role, probable component of the anaphase promoting complex/cyclosome (APC/C), a cell cycle-regulated E3 ubiquitin ligase that controls progression through mitosis and the G1 phase of the cell cycle. The APC/C complex acts by mediating ubiquitination and subsequent degradation of target proteins. Developmental role in early embryogenesis and the metaphase to anaphase transition in oocyte and spermatocyte meiosis and mitosis in somatic and germ cells. Required for embryonic anterior-posterior axis formation. Negatively regulates ify-1 protein levels during meiosis I. Plays a role in regulating the abundance of glr-1 receptors in postmitotic neurons, which may in turn control animal locomotion. Involved in regulating GABA neurotransmitter release at neuromuscular junctions in GABA motor neurons. This chain is Abnormal embryogenesis protein 30, found in Caenorhabditis elegans.